We begin with the raw amino-acid sequence, 207 residues long: ATP-dependent Clp protease proteolytic subunit (207 aa).

The active-site Nucleophile is the Ser111. His136 is an active-site residue.

It belongs to the peptidase S14 family. Fourteen ClpP subunits assemble into 2 heptameric rings which stack back to back to give a disk-like structure with a central cavity, resembling the structure of eukaryotic proteasomes.

It localises to the cytoplasm. The catalysed reaction is Hydrolysis of proteins to small peptides in the presence of ATP and magnesium. alpha-casein is the usual test substrate. In the absence of ATP, only oligopeptides shorter than five residues are hydrolyzed (such as succinyl-Leu-Tyr-|-NHMec, and Leu-Tyr-Leu-|-Tyr-Trp, in which cleavage of the -Tyr-|-Leu- and -Tyr-|-Trp bonds also occurs).. Functionally, cleaves peptides in various proteins in a process that requires ATP hydrolysis. Has a chymotrypsin-like activity. Plays a major role in the degradation of misfolded proteins. This Aliivibrio salmonicida (strain LFI1238) (Vibrio salmonicida (strain LFI1238)) protein is ATP-dependent Clp protease proteolytic subunit.